A 576-amino-acid chain; its full sequence is Sulfite reductase [NADPH] hemoprotein beta-component (576 aa).

[4Fe-4S] cluster-binding residues include Cys435, Cys441, Cys480, and Cys484. Cys484 is a siroheme binding site.

Belongs to the nitrite and sulfite reductase 4Fe-4S domain family. In terms of assembly, alpha(8)-beta(8). The alpha component is a flavoprotein, the beta component is a hemoprotein. Siroheme is required as a cofactor. [4Fe-4S] cluster serves as cofactor.

The catalysed reaction is hydrogen sulfide + 3 NADP(+) + 3 H2O = sulfite + 3 NADPH + 4 H(+). It functions in the pathway sulfur metabolism; hydrogen sulfide biosynthesis; hydrogen sulfide from sulfite (NADPH route): step 1/1. Functionally, component of the sulfite reductase complex that catalyzes the 6-electron reduction of sulfite to sulfide. This is one of several activities required for the biosynthesis of L-cysteine from sulfate. In Photorhabdus laumondii subsp. laumondii (strain DSM 15139 / CIP 105565 / TT01) (Photorhabdus luminescens subsp. laumondii), this protein is Sulfite reductase [NADPH] hemoprotein beta-component.